The sequence spans 432 residues: Enolase (432 aa).

Gln167 lines the (2R)-2-phosphoglycerate pocket. The Proton donor role is filled by Glu209. Mg(2+)-binding residues include Asp246, Glu291, and Asp318. Positions 343, 372, 373, and 394 each coordinate (2R)-2-phosphoglycerate. Lys343 serves as the catalytic Proton acceptor.

It belongs to the enolase family. Component of the RNA degradosome, a multiprotein complex involved in RNA processing and mRNA degradation. The cofactor is Mg(2+).

It localises to the cytoplasm. The protein localises to the secreted. The protein resides in the cell surface. The catalysed reaction is (2R)-2-phosphoglycerate = phosphoenolpyruvate + H2O. It functions in the pathway carbohydrate degradation; glycolysis; pyruvate from D-glyceraldehyde 3-phosphate: step 4/5. Functionally, catalyzes the reversible conversion of 2-phosphoglycerate (2-PG) into phosphoenolpyruvate (PEP). It is essential for the degradation of carbohydrates via glycolysis. The polypeptide is Enolase (Pseudoalteromonas translucida (strain TAC 125)).